Here is a 136-residue protein sequence, read N- to C-terminus: MAKAIPKKGSRGRIGSRKSTRKIPKGVIHIQASFNNTIVTVTDVRGRVVSWSSAGTSGFRGTKRGTPFAAQTAAGHAIRAVVDQGMQRAEVMIKGPGLGRDAALRAIRRSGILLTFVRDVTPMPHNGCRPPKKRRV.

The disordered stretch occupies residues 1–22; the sequence is MAKAIPKKGSRGRIGSRKSTRK.

Belongs to the universal ribosomal protein uS11 family. Part of the 30S ribosomal subunit.

Its subcellular location is the plastid. It is found in the chloroplast. In Lactuca sativa (Garden lettuce), this protein is Small ribosomal subunit protein uS11c.